The primary structure comprises 438 residues: Myosin light chain kinase, smooth muscle (438 aa).

The Protein kinase domain occupies 1–241 (FRLVEKKTGK…CTQCLQHPWL (241 aa)). Lysine 15 contributes to the ATP binding site. Position 97 is a phosphotyrosine; by ABL1 (tyrosine 97). Aspartate 107 (proton acceptor) is an active-site residue. Residue tyrosine 157 is modified to Phosphotyrosine; by ABL1. Residues 233-296 (TQCLQHPWLX…SGLSGRKSST (64 aa)) form a calmodulin-binding region. 5 positions are modified to phosphoserine: serine 281, serine 282, serine 294, serine 295, and serine 298. A telokin region spans residues 283–438 (MAMISGLSGR…GEGGEEEEEE (156 aa)). Positions 289 to 309 (LSGRKSSTGSPTSPLNAEKLE) are disordered. Polar residues predominate over residues 292 to 303 (RKSSTGSPTSPL). Threonine 300 carries the post-translational modification Phosphothreonine. The residue at position 301 (serine 301) is a Phosphoserine. The Ig-like C2-type domain maps to 331 to 420 (PYFSKTIRDL…GEATCTAELI (90 aa)). Cysteine 352 and cysteine 404 are joined by a disulfide.

This sequence belongs to the protein kinase superfamily. CAMK Ser/Thr protein kinase family. As to quaternary structure, all isoforms including Telokin bind calmodulin. Interacts with SVIL. Interacts with CTTN; this interaction is reduced during thrombin-induced endothelial cell (EC) contraction but is promoted by the barrier-protective agonist sphingosine 1-phosphate (S1P) within lamellipodia. A complex made of ABL1, CTTN and MYLK regulates cortical actin-based cytoskeletal rearrangement critical to sphingosine 1-phosphate (S1P)-mediated endothelial cell (EC) barrier enhancement. Binds to NAA10/ARD1 and PTK2B/PYK2. It depends on Mg(2+) as a cofactor. The cofactor is Ca(2+). The C-terminus is deglutamylated by AGTPBP1/CCP1, AGBL1/CCP4 and AGBL4/CCP6, leading to the formation of Myosin light chain kinase, smooth muscle, deglutamylated form. The consequences of C-terminal deglutamylation are unknown. Post-translationally, can probably be down-regulated by phosphorylation. Tyrosine phosphorylation by ABL1 increases kinase activity, reverses MLCK-mediated inhibition of Arp2/3-mediated actin polymerization, and enhances CTTN-binding. Phosphorylation by SRC promotes CTTN binding.

Its subcellular location is the cytoplasm. It localises to the cell projection. The protein localises to the lamellipodium. The protein resides in the cleavage furrow. It is found in the cytoskeleton. Its subcellular location is the stress fiber. The enzyme catalyses L-seryl-[myosin light chain] + ATP = O-phospho-L-seryl-[myosin light chain] + ADP + H(+). It carries out the reaction L-threonyl-[myosin light chain] + ATP = O-phospho-L-threonyl-[myosin light chain] + ADP + H(+). Functionally, calcium/calmodulin-dependent myosin light chain kinase implicated in smooth muscle contraction via phosphorylation of myosin light chains (MLC). Also regulates actin-myosin interaction through a non-kinase activity. Phosphorylates PTK2B/PYK2 and myosin light-chains. Involved in the inflammatory response (e.g. apoptosis, vascular permeability, leukocyte diapedesis), cell motility and morphology, airway hyperreactivity and other activities relevant to asthma. Required for tonic airway smooth muscle contraction that is necessary for physiological and asthmatic airway resistance. Necessary for gastrointestinal motility. Implicated in the regulation of endothelial as well as vascular permeability, probably via the regulation of cytoskeletal rearrangements. In the nervous system it has been shown to control the growth initiation of astrocytic processes in culture and to participate in transmitter release at synapses formed between cultured sympathetic ganglion cells. Critical participant in signaling sequences that result in fibroblast apoptosis. Plays a role in the regulation of epithelial cell survival. Required for epithelial wound healing, especially during actomyosin ring contraction during purse-string wound closure. Mediates RhoA-dependent membrane blebbing. Triggers TRPC5 channel activity in a calcium-dependent signaling, by inducing its subcellular localization at the plasma membrane. Promotes cell migration (including tumor cells) and tumor metastasis. PTK2B/PYK2 activation by phosphorylation mediates ITGB2 activation and is thus essential to trigger neutrophil transmigration during acute lung injury (ALI). May regulate optic nerve head astrocyte migration. Probably involved in mitotic cytoskeletal regulation. Regulates tight junction probably by modulating ZO-1 exchange in the perijunctional actomyosin ring. Mediates burn-induced microvascular barrier injury; triggers endothelial contraction in the development of microvascular hyperpermeability by phosphorylating MLC. Essential for intestinal barrier dysfunction. Mediates Giardia spp.-mediated reduced epithelial barrier function during giardiasis intestinal infection via reorganization of cytoskeletal F-actin and tight junctional ZO-1. Necessary for hypotonicity-induced Ca(2+) entry and subsequent activation of volume-sensitive organic osmolyte/anion channels (VSOAC) in cervical cancer cells. This Ovis aries (Sheep) protein is Myosin light chain kinase, smooth muscle (MYLK).